The following is a 1261-amino-acid chain: MVYTKAWFLQNIARQTLGKNVAVHRPPLKLGNMTNWIQQQQAQTNLSLSNTKAPGSLDERLFLTEDDIIFHDRSIQLGYFDPSLSERKQSPPGKSLHRFVDNLNPNSSHFSASLLPASLSSLCDSTCGDVDDEQQFNSLATSPLSTETQSEVSDPLLDTLTPNSLESSFASISLNSFTSANEFIQFLKRLASSKLSIHTFDLYKLVRNSPELLTLEAYNIVLQCMSTDDYFLSSSKNIQKIIKVYVDMLNSFISPNVTTFETVIFALCRRAKFVHQKIESLSKRTIYAHPSIAKEIQPELLDLQSEMPLQTAVFMFTSSLINHDLIYSPQFYAILIESVSLYGTQSQLDSLLECVPLGTIEANGHPDLLPALIRALGRAKRLNSCFQLLERYNLSDPTSDTSMTNVRSWEGLMEAYFDTDHHVEASALMKSFFRKADSNQVIPSSILDCFLRRLAQLGHYKESAEWLGMAIEKISTYKASPSTLSSILEAACLNNNDKFAIAFVRKYTLSRFSDCHAVLLRYLDLLARSGNVDLLHLHAYPVICSVSSHTNFTFSNVYKAFIENGKIDVALRLLRKHIDPKVSLGNNTAPSSNSVALQLSILNGFWEVLTEELQKDVHVLLSLVSTLENQVNFPQVDFTTPLLRHITGYLVSRRLEPELISPRVFGFLLEYAAFNVVQTEGTFTSKVILTDLLKCYSNGTYKASFKNVHVVLRSFTYLKEDEMLVASVRDDIVSEAVVGFSTDNNGQKILADISQVCYCLDDLECIDQSINSLVSKMLTSASPEQVDVNILFFQFGKLIETNKFLHPEVYPTLISVLSKNKRFDAVQRVFEHSKHLYRKISTKSLEKANWFMALILDAMILSSSFARQFKSSNLFCDNMKMLGYIPRASTFAHLINNSTRRGDTDDATTALNIFEETKRHNVKPSVFLYNAVLSKLGRARRTTECWKLFQEMKESGLLPTSVTYGTVINAACRIGDESLAEKLFAEMENQPNYQPRVAPYNTMIQFEVQTMFNREKALFYYNRLCATDIEPSSHTYKLLMDAYGTLKPVNVGSVKAVLELMERTDVPILSMHYAAYIHILGNVVSDVQAATSCYMNALAKHDAGEIQLDANLFQSQIESLIANDRIVEGIQIVSDMKRYNVSLNAYIVNALIKGFTKVGMISKARYYFDLLECEGMSGKEPSTYENMVRAYLSVNDGRKAMEIVEQLKRKRYPLPVVNRISSLVNSHMGQKPKRRSLNTSHSSLASLGNASTQHSINSSIN.

15 PPR repeats span residues 365–404, 405–442, 443–479, 480–514, 550–584, 806–849, 852–886, 887–924, 925–959, 960–995, 996–1031, 1032–1068, 1109–1143, 1144–1179, and 1180–1214; these read HPDLLPALIRALGRAKRLNSCFQLLERYNLSDPTSDTSMT, NVRSWEGLMEAYFDTDHHVEASALMKSFFRKADSNQVI, PSSILDCFLRRLAQLGHYKESAEWLGMAIEKISTYKA, SPSTLSSILEAACLNNNDKFAIAFVRKYTLSRFSD, TNFTFSNVYKAFIENGKIDVALRLLRKHIDPKVSL, HPEV…EKAN, MALILDAMILSSSFARQFKSSNLFCDNMKMLGYIP, RASTFAHLINNSTRRGDTDDATTALNIFEETKRHNVKP, SVFLYNAVLSKLGRARRTTECWKLFQEMKESGLLP, TSVTYGTVINAACRIGDESLAEKLFAEMENQPNYQP, RVAPYNTMIQFEVQTMFNREKALFYYNRLCATDIEP, SSHTYKLLMDAYGTLKPVNVGSVKAVLELMERTDVPI, DANLFQSQIESLIANDRIVEGIQIVSDMKRYNVSL, NAYIVNALIKGFTKVGMISKARYYFDLLECEGMSGK, and EPSTYENMVRAYLSVNDGRKAMEIVEQLKRKRYPL. The tract at residues 1225–1261 is disordered; it reads NSHMGQKPKRRSLNTSHSSLASLGNASTQHSINSSIN. The segment covering 1237-1261 has biased composition (polar residues); that stretch reads LNTSHSSLASLGNASTQHSINSSIN.

The protein resides in the mitochondrion. Its function is as follows. Mitochondrial RNA-binding protein that acts as a general negative regulator of mitochondrial translation. This chain is Pentatricopeptide repeat-containing protein 5, mitochondrial (ppr5), found in Schizosaccharomyces pombe (strain 972 / ATCC 24843) (Fission yeast).